The chain runs to 290 residues: MLKTVHQKAGRHTRPVRAWLKLLWQRIDEDNMTTLAGNLAYVSLLSLVPLIAVVFALFAAFPMFSDVSIQLRHFIFANFMPATGDVIQRYIEQFVANSNKMTAVGACGLIVTALLLMYAIDSALNTIWRSKRTRPKVYSFAVYWMILTLGPLLAGASLAISSYLLSLRWASDLNTVIDNVLRILPLLLSWISFWLLYSIVPTTRVPNRDALVGAFVAALLFEAGKKGFALYITMFPSYQLIYGVLAVIPILFVWVYWTWCIVLLGAEITVTLGEYRKLKQAAEQEEADQP.

6 helical membrane passes run 44–64 (LLSLVPLIAVVFALFAAFPMF), 104–124 (VGACGLIVTALLLMYAIDSAL), 140–160 (FAVYWMILTLGPLLAGASLAI), 183–203 (ILPLLLSWISFWLLYSIVPTT), 210–230 (ALVGAFVAALLFEAGKKGFAL), and 244–264 (VLAVIPILFVWVYWTWCIVLL).

The protein belongs to the UPF0761 family.

It localises to the cell inner membrane. The chain is UPF0761 membrane protein YihY from Salmonella agona (strain SL483).